The chain runs to 292 residues: Bifunctional protein FolD (292 aa).

Residues 166–168 (GRS), Ser191, and Ile232 contribute to the NADP(+) site.

Belongs to the tetrahydrofolate dehydrogenase/cyclohydrolase family. In terms of assembly, homodimer.

It catalyses the reaction (6R)-5,10-methylene-5,6,7,8-tetrahydrofolate + NADP(+) = (6R)-5,10-methenyltetrahydrofolate + NADPH. The enzyme catalyses (6R)-5,10-methenyltetrahydrofolate + H2O = (6R)-10-formyltetrahydrofolate + H(+). Its pathway is one-carbon metabolism; tetrahydrofolate interconversion. Catalyzes the oxidation of 5,10-methylenetetrahydrofolate to 5,10-methenyltetrahydrofolate and then the hydrolysis of 5,10-methenyltetrahydrofolate to 10-formyltetrahydrofolate. This Wolbachia sp. subsp. Drosophila simulans (strain wRi) protein is Bifunctional protein FolD.